Here is a 125-residue protein sequence, read N- to C-terminus: MAGGVGGRVVVGRHVYGNLYGCDSRVLRDEAALITIVKEAVKVANAMLLSIGSYRFGPGGGLTVFAVVAESHISIHTWPEHGFATVDVYTCGDHTDPKAAFDYIVSQLRPKRVEVFFGDRSMYGE.

Serine 71 serves as the catalytic Schiff-base intermediate with substrate; via pyruvic acid. Position 71 is a pyruvic acid (Ser); by autocatalysis (serine 71). The active-site Proton acceptor; for processing activity is the histidine 76. The active-site Proton donor; for catalytic activity is cysteine 91.

It belongs to the prokaryotic AdoMetDC family. Type 1 subfamily. As to quaternary structure, heterotetramer of two alpha and two beta chains arranged as a dimer of alpha/beta heterodimers. Pyruvate serves as cofactor. Is synthesized initially as an inactive proenzyme. Formation of the active enzyme involves a self-maturation process in which the active site pyruvoyl group is generated from an internal serine residue via an autocatalytic post-translational modification. Two non-identical subunits are generated from the proenzyme in this reaction, and the pyruvate is formed at the N-terminus of the alpha chain, which is derived from the carboxyl end of the proenzyme. The post-translation cleavage follows an unusual pathway, termed non-hydrolytic serinolysis, in which the side chain hydroxyl group of the serine supplies its oxygen atom to form the C-terminus of the beta chain, while the remainder of the serine residue undergoes an oxidative deamination to produce ammonia and the pyruvoyl group blocking the N-terminus of the alpha chain.

It carries out the reaction S-adenosyl-L-methionine + H(+) = S-adenosyl 3-(methylsulfanyl)propylamine + CO2. It functions in the pathway amine and polyamine biosynthesis; S-adenosylmethioninamine biosynthesis; S-adenosylmethioninamine from S-adenosyl-L-methionine: step 1/1. In terms of biological role, catalyzes the decarboxylation of S-adenosylmethionine to S-adenosylmethioninamine (dcAdoMet), the propylamine donor required for the synthesis of the polyamines spermine and spermidine from the diamine putrescine. The polypeptide is S-adenosylmethionine decarboxylase proenzyme (Pyrobaculum aerophilum (strain ATCC 51768 / DSM 7523 / JCM 9630 / CIP 104966 / NBRC 100827 / IM2)).